The sequence spans 177 residues: Secretion monitor (177 aa).

Positions 1–37 are cleaved as a signal peptide; it reads MIGILNRWRQFGRRYFWPHLLLGMVAASLGVPSNLSG.

It belongs to the SecM family.

The protein localises to the cytoplasm. The protein resides in the cytosol. It localises to the periplasm. In terms of biological role, regulates secA expression by translational coupling of the secM secA operon. Translational pausing at a specific Pro residue 5 residues before the end of the protein may allow disruption of a mRNA repressor helix that normally suppresses secA translation initiation. In Yersinia pseudotuberculosis serotype O:1b (strain IP 31758), this protein is Secretion monitor.